We begin with the raw amino-acid sequence, 585 residues long: Pyruvate kinase (585 aa).

Residue Arg-32 coordinates substrate. K(+) is bound by residues Asn-34, Ser-36, Asp-66, and Thr-67. 34–37 (NFSH) lines the ATP pocket. ATP is bound by residues Arg-73 and Lys-156. Glu-222 contributes to the Mg(2+) binding site. Positions 245, 246, and 278 each coordinate substrate. Asp-246 provides a ligand contact to Mg(2+).

This sequence belongs to the pyruvate kinase family. It in the C-terminal section; belongs to the PEP-utilizing enzyme family. In terms of assembly, homotetramer. It depends on Mg(2+) as a cofactor. The cofactor is K(+).

It carries out the reaction pyruvate + ATP = phosphoenolpyruvate + ADP + H(+). The protein operates within carbohydrate degradation; glycolysis; pyruvate from D-glyceraldehyde 3-phosphate: step 5/5. The sequence is that of Pyruvate kinase (pyk) from Bacillus licheniformis.